The following is a 225-amino-acid chain: Ribose-5-phosphate isomerase A (225 aa).

Substrate contacts are provided by residues 27-30, 82-85, and 95-98; these read SGST, DGAD, and KGGG. The Proton acceptor role is filled by Glu104. Lys122 contacts substrate.

It belongs to the ribose 5-phosphate isomerase family. As to quaternary structure, homodimer.

The catalysed reaction is aldehydo-D-ribose 5-phosphate = D-ribulose 5-phosphate. Its pathway is carbohydrate degradation; pentose phosphate pathway; D-ribose 5-phosphate from D-ribulose 5-phosphate (non-oxidative stage): step 1/1. Functionally, catalyzes the reversible conversion of ribose-5-phosphate to ribulose 5-phosphate. This chain is Ribose-5-phosphate isomerase A, found in Archaeoglobus fulgidus (strain ATCC 49558 / DSM 4304 / JCM 9628 / NBRC 100126 / VC-16).